Reading from the N-terminus, the 186-residue chain is Lipid A acyltransferase PagP (186 aa).

The signal sequence occupies residues 1 to 19 (MKRLISCLTIICALNRSAA). Active-site residues include His60, Asp103, and Ser104.

It belongs to the lipid A palmitoyltransferase family. In terms of assembly, homodimer.

Its subcellular location is the cell outer membrane. The catalysed reaction is a lipid A + a 1,2-diacyl-sn-glycero-3-phosphocholine = a hepta-acyl lipid A + a 2-acyl-sn-glycero-3-phosphocholine. It catalyses the reaction a lipid IVA + a 1,2-diacyl-sn-glycero-3-phosphocholine = a lipid IVB + a 2-acyl-sn-glycero-3-phosphocholine. It carries out the reaction a lipid IIA + a 1,2-diacyl-sn-glycero-3-phosphocholine = a lipid IIB + a 2-acyl-sn-glycero-3-phosphocholine. In terms of biological role, transfers a fatty acid residue from the sn-1 position of a phospholipid to the N-linked hydroxyfatty acid chain on the proximal unit of lipid A or its precursors. Confers resistance to cationic antimicrobial peptides (CAMPs). Promotes the ability of L.pneumophila to replicate and/or survive in macrophages. Important for ability to kill macrophages and to promote the virulence. This Legionella pneumophila protein is Lipid A acyltransferase PagP.